The primary structure comprises 95 residues: Large ribosomal subunit protein uL23 (95 aa).

This sequence belongs to the universal ribosomal protein uL23 family. Part of the 50S ribosomal subunit. Contacts protein L29, and trigger factor when it is bound to the ribosome.

One of the early assembly proteins it binds 23S rRNA. One of the proteins that surrounds the polypeptide exit tunnel on the outside of the ribosome. Forms the main docking site for trigger factor binding to the ribosome. The polypeptide is Large ribosomal subunit protein uL23 (Pediococcus pentosaceus (strain ATCC 25745 / CCUG 21536 / LMG 10740 / 183-1w)).